A 158-amino-acid polypeptide reads, in one-letter code: Large ribosomal subunit protein uL11 (158 aa).

The interval 1–21 is disordered; sequence MAQSVKTMVEGGKATTGPPIG.

The protein belongs to the universal ribosomal protein uL11 family. As to quaternary structure, part of the ribosomal stalk of the 50S ribosomal subunit. Interacts with L10 and the large rRNA to form the base of the stalk. L10 forms an elongated spine to which L12 dimers bind in a sequential fashion forming a multimeric L10(L12)X complex.

Functionally, forms part of the ribosomal stalk which helps the ribosome interact with GTP-bound translation factors. This chain is Large ribosomal subunit protein uL11, found in Thermoplasma volcanium (strain ATCC 51530 / DSM 4299 / JCM 9571 / NBRC 15438 / GSS1).